The chain runs to 145 residues: Small ribosomal subunit protein eS19 (145 aa).

This sequence belongs to the eukaryotic ribosomal protein eS19 family. As to quaternary structure, part of the 30S ribosomal subunit.

Functionally, may be involved in maturation of the 30S ribosomal subunit. The sequence is that of Small ribosomal subunit protein eS19 from Methanothermobacter thermautotrophicus (strain ATCC 29096 / DSM 1053 / JCM 10044 / NBRC 100330 / Delta H) (Methanobacterium thermoautotrophicum).